A 149-amino-acid polypeptide reads, in one-letter code: Nucleoside diphosphate kinase (149 aa).

ATP is bound by residues lysine 9, phenylalanine 57, arginine 85, threonine 91, arginine 102, and asparagine 112. Histidine 115 acts as the Pros-phosphohistidine intermediate in catalysis.

This sequence belongs to the NDK family. As to quaternary structure, homotetramer. The cofactor is Mg(2+).

It is found in the cytoplasm. It catalyses the reaction a 2'-deoxyribonucleoside 5'-diphosphate + ATP = a 2'-deoxyribonucleoside 5'-triphosphate + ADP. It carries out the reaction a ribonucleoside 5'-diphosphate + ATP = a ribonucleoside 5'-triphosphate + ADP. Major role in the synthesis of nucleoside triphosphates other than ATP. The ATP gamma phosphate is transferred to the NDP beta phosphate via a ping-pong mechanism, using a phosphorylated active-site intermediate. The chain is Nucleoside diphosphate kinase from Staphylococcus aureus (strain Mu3 / ATCC 700698).